Consider the following 115-residue polypeptide: MKYTKQEARKRRHYRVRSKVSGTAAKPRLNVFKSNTNFYAQIIDDTTGTTLVSASSLNLGLKSGNIEAAKKVAEEIAKLAIAKSIVDVVFDRGGYLYHGKVKAFAEAARENGLKF.

The tract at residues M1–V20 is disordered. The span at A8–S18 shows a compositional bias: basic residues.

The protein belongs to the universal ribosomal protein uL18 family. Part of the 50S ribosomal subunit; part of the 5S rRNA/L5/L18/L25 subcomplex. Contacts the 5S and 23S rRNAs.

In terms of biological role, this is one of the proteins that bind and probably mediate the attachment of the 5S RNA into the large ribosomal subunit, where it forms part of the central protuberance. This chain is Large ribosomal subunit protein uL18, found in Mesoplasma florum (strain ATCC 33453 / NBRC 100688 / NCTC 11704 / L1) (Acholeplasma florum).